The following is a 232-amino-acid chain: Cytidylate kinase (232 aa).

11-19 (GPAGAGKST) provides a ligand contact to ATP.

It belongs to the cytidylate kinase family. Type 1 subfamily.

The protein localises to the cytoplasm. It catalyses the reaction CMP + ATP = CDP + ADP. It carries out the reaction dCMP + ATP = dCDP + ADP. This is Cytidylate kinase from Roseiflexus castenholzii (strain DSM 13941 / HLO8).